The following is a 202-amino-acid chain: uncharacterized protein (202 aa).

This is an uncharacterized protein from Homo sapiens (Human).